Consider the following 342-residue polypeptide: 3-isopropylmalate dehydrogenase (342 aa).

Arginine 87, arginine 97, arginine 121, and aspartate 212 together coordinate substrate. Residues aspartate 212, aspartate 236, and aspartate 240 each coordinate Mg(2+). An NAD(+)-binding site is contributed by 272-284 (GSAPDIAGRQLAD). Low complexity predominate over residues 319-328 (RAAAGAAQPS). The segment at 319–342 (RAAAGAAQPSTRERGEDLAARAAG) is disordered. Residues 329 to 342 (TRERGEDLAARAAG) are compositionally biased toward basic and acidic residues.

This sequence belongs to the isocitrate and isopropylmalate dehydrogenases family. LeuB type 2 subfamily. In terms of assembly, homodimer. Requires Mg(2+) as cofactor. The cofactor is Mn(2+).

The protein resides in the cytoplasm. The catalysed reaction is (2R,3S)-3-isopropylmalate + NAD(+) = 4-methyl-2-oxopentanoate + CO2 + NADH. It functions in the pathway amino-acid biosynthesis; L-leucine biosynthesis; L-leucine from 3-methyl-2-oxobutanoate: step 3/4. Catalyzes the oxidation of 3-carboxy-2-hydroxy-4-methylpentanoate (3-isopropylmalate) to 3-carboxy-4-methyl-2-oxopentanoate. The product decarboxylates to 4-methyl-2 oxopentanoate. The sequence is that of 3-isopropylmalate dehydrogenase from Frankia casuarinae (strain DSM 45818 / CECT 9043 / HFP020203 / CcI3).